The following is a 415-amino-acid chain: Multifunctional CCA protein (415 aa).

2 residues coordinate ATP: Gly8 and Arg11. 2 residues coordinate CTP: Gly8 and Arg11. Residues Asp21 and Asp23 each contribute to the Mg(2+) site. Residues Arg91, Arg137, and Arg140 each contribute to the ATP site. CTP-binding residues include Arg91, Arg137, and Arg140. An HD domain is found at 228–329 (TGIHTLMTLA…VGLFDSIDAW (102 aa)).

This sequence belongs to the tRNA nucleotidyltransferase/poly(A) polymerase family. Bacterial CCA-adding enzyme type 1 subfamily. As to quaternary structure, monomer. Can also form homodimers and oligomers. The cofactor is Mg(2+). It depends on Ni(2+) as a cofactor.

It carries out the reaction a tRNA precursor + 2 CTP + ATP = a tRNA with a 3' CCA end + 3 diphosphate. It catalyses the reaction a tRNA with a 3' CCA end + 2 CTP + ATP = a tRNA with a 3' CCACCA end + 3 diphosphate. Functionally, catalyzes the addition and repair of the essential 3'-terminal CCA sequence in tRNAs without using a nucleic acid template. Adds these three nucleotides in the order of C, C, and A to the tRNA nucleotide-73, using CTP and ATP as substrates and producing inorganic pyrophosphate. tRNA 3'-terminal CCA addition is required both for tRNA processing and repair. Also involved in tRNA surveillance by mediating tandem CCA addition to generate a CCACCA at the 3' terminus of unstable tRNAs. While stable tRNAs receive only 3'-terminal CCA, unstable tRNAs are marked with CCACCA and rapidly degraded. The polypeptide is Multifunctional CCA protein (Cronobacter sakazakii (strain ATCC BAA-894) (Enterobacter sakazakii)).